A 205-amino-acid chain; its full sequence is ATP synthase subunit b 1 (205 aa).

Residues 1–15 show a composition bias toward polar residues; the sequence is MFVSTAFAQTATESQ. The tract at residues 1-26 is disordered; it reads MFVSTAFAQTATESQPAPAAGEHGAA. Positions 16–26 are enriched in low complexity; it reads PAPAAGEHGAA. The helical transmembrane segment at 56–78 threads the bilayer; sequence SQILWLAITFGLFYLFMSRVVLP.

The protein belongs to the ATPase B chain family. As to quaternary structure, F-type ATPases have 2 components, F(1) - the catalytic core - and F(0) - the membrane proton channel. F(1) has five subunits: alpha(3), beta(3), gamma(1), delta(1), epsilon(1). F(0) has three main subunits: a(1), b(2) and c(10-14). The alpha and beta chains form an alternating ring which encloses part of the gamma chain. F(1) is attached to F(0) by a central stalk formed by the gamma and epsilon chains, while a peripheral stalk is formed by the delta and b chains.

It localises to the cell inner membrane. Its function is as follows. F(1)F(0) ATP synthase produces ATP from ADP in the presence of a proton or sodium gradient. F-type ATPases consist of two structural domains, F(1) containing the extramembraneous catalytic core and F(0) containing the membrane proton channel, linked together by a central stalk and a peripheral stalk. During catalysis, ATP synthesis in the catalytic domain of F(1) is coupled via a rotary mechanism of the central stalk subunits to proton translocation. Functionally, component of the F(0) channel, it forms part of the peripheral stalk, linking F(1) to F(0). This chain is ATP synthase subunit b 1, found in Brucella anthropi (strain ATCC 49188 / DSM 6882 / CCUG 24695 / JCM 21032 / LMG 3331 / NBRC 15819 / NCTC 12168 / Alc 37) (Ochrobactrum anthropi).